A 211-amino-acid chain; its full sequence is MLTIALSKGRILDDTLPLLAEAGIVPTENPDKSRKLIIPTTQADVRLLIVRATDVPTYVEHGAADLGVAGKDVLMEYTGQGLYEPLDLQIAKCKLMTAGAIGAVEPKGRLRVATKFVNVAKRYYAEQGRQVDIIKLYGSMELAPLIGLADKIIDVVDTGNTLRANGLEPQELIATISSRLVVNKASMKMQHARIQALIDTLRKAVESRHRS.

The protein belongs to the ATP phosphoribosyltransferase family. Short subfamily. In terms of assembly, heteromultimer composed of HisG and HisZ subunits.

The protein localises to the cytoplasm. The catalysed reaction is 1-(5-phospho-beta-D-ribosyl)-ATP + diphosphate = 5-phospho-alpha-D-ribose 1-diphosphate + ATP. It functions in the pathway amino-acid biosynthesis; L-histidine biosynthesis; L-histidine from 5-phospho-alpha-D-ribose 1-diphosphate: step 1/9. In terms of biological role, catalyzes the condensation of ATP and 5-phosphoribose 1-diphosphate to form N'-(5'-phosphoribosyl)-ATP (PR-ATP). Has a crucial role in the pathway because the rate of histidine biosynthesis seems to be controlled primarily by regulation of HisG enzymatic activity. The sequence is that of ATP phosphoribosyltransferase from Pseudomonas savastanoi pv. phaseolicola (strain 1448A / Race 6) (Pseudomonas syringae pv. phaseolicola (strain 1448A / Race 6)).